The chain runs to 502 residues: Maturase K (502 aa).

The protein belongs to the intron maturase 2 family. MatK subfamily.

The protein localises to the plastid. It is found in the chloroplast. Usually encoded in the trnK tRNA gene intron. Probably assists in splicing its own and other chloroplast group II introns. The protein is Maturase K of Ehretia anacua (Sandpaper tree).